A 268-amino-acid polypeptide reads, in one-letter code: Zinc transporter ZupT (268 aa).

Helical transmembrane passes span 6-26 (LAFL…LIAF), 37-57 (SFAL…DIFF), 70-90 (TQGY…IGFI), 125-145 (GLFT…ATFV), and 152-172 (SIGL…GIAV). Fe(2+)-binding residues include Asn-136 and Glu-139. Zn(2+)-binding residues include Glu-139 and His-164. Residues Asn-165, Glu-168, and Glu-197 each coordinate Fe(2+). Glu-168 is a Zn(2+) binding site. Transmembrane regions (helical) follow at residues 201–221 (AIVA…GIIF) and 248–268 (MSMY…LLLA).

Belongs to the ZIP transporter (TC 2.A.5) family. ZupT subfamily.

The protein localises to the cell membrane. It catalyses the reaction Zn(2+)(in) = Zn(2+)(out). Functionally, mediates zinc uptake. May also transport other divalent cations. This chain is Zinc transporter ZupT, found in Oceanobacillus iheyensis (strain DSM 14371 / CIP 107618 / JCM 11309 / KCTC 3954 / HTE831).